A 515-amino-acid chain; its full sequence is SWI/SNF-related matrix-associated actin-dependent regulator of chromatin subfamily D member 1 (515 aa).

Positions 1 to 128 are disordered; it reads MAARAGFQSV…RNHNAKKKKM (128 aa). Gly residues predominate over residues 14-23; the sequence is GGAGASGGAG. The segment at 43-167 is interaction with ESR1, NR1H4, NR3C1, PGR and SMARCA4; it reads APGQGLYRSP…DQTIMRKRLD (125 aa). R68 and R88 each carry asymmetric dimethylarginine. K101 is covalently cross-linked (Glycyl lysine isopeptide (Lys-Gly) (interchain with G-Cter in SUMO2)). The segment covering 104 to 117 has biased composition (low complexity); the sequence is APQQIQQVQQQAVQ. The interaction with SMARCC1 and SMARCC2 stretch occupies residues 168-474; the sequence is IQEALKRPIK…TMTDVVGNPE (307 aa). The segment at 180 to 515 is necessary for GR/NR3C1-mediated remodeling and transcription from chromatin; required for GR/NR3C1 interaction with the BRG1/SMARCA4 complex in vivo; the sequence is RKLRIFISNT…LEQALGIRNT (336 aa). A Phosphothreonine modification is found at T203. K223 carries the post-translational modification N6-acetyllysine. In terms of domain architecture, SWIB/MDM2 spans 290–367; it reads YQPPQFKLDP…PQRLHALLMP (78 aa). The stretch at 412 to 440 forms a coiled coil; sequence ASQQEIATLDNKIHETIETINQLKTQREF.

The protein belongs to the SMARCD family. As to quaternary structure, component of the multiprotein chromatin-remodeling complexes SWI/SNF: SWI/SNF-A (BAF), SWI/SNF-B (PBAF) and related complexes. The canonical complex contains a catalytic subunit (either SMARCA4/BRG1/BAF190A or SMARCA2/BRM/BAF190B), and at least SMARCE1, ACTL6A/BAF53, SMARCC1/BAF155, SMARCC2/BAF170, and SMARCB1/SNF5/BAF47. Other subunits specific to each of the complexes may also be present permitting several possible combinations developmentally and tissue specific. Component of the BAF complex, which includes at least actin (ACTB), ARID1A/BAF250A, ARID1B/BAF250B, SMARCA2/BRM, SMARCA4/BRG1/BAF190A, ACTL6A/BAF53, ACTL6B/BAF53B, SMARCE1/BAF57, SMARCC1/BAF155, SMARCC2/BAF170, SMARCB1/SNF5/INI1, and one or more SMARCD1/BAF60A, SMARCD2/BAF60B, or SMARCD3/BAF60C. In muscle cells, the BAF complex also contains DPF3. Component of neural progenitors-specific chromatin remodeling complex (npBAF complex) composed of at least, ARID1A/BAF250A or ARID1B/BAF250B, SMARCD1/BAF60A, SMARCD3/BAF60C, SMARCA2/BRM/BAF190B, SMARCA4/BRG1/BAF190A, SMARCB1/BAF47, SMARCC1/BAF155, SMARCE1/BAF57, SMARCC2/BAF170, PHF10/BAF45A, ACTL6A/BAF53A and actin. Component of neuron-specific chromatin remodeling complex (nBAF complex) composed of at least, ARID1A/BAF250A or ARID1B/BAF250B, SMARCD1/BAF60A, SMARCD3/BAF60C, SMARCA2/BRM/BAF190B, SMARCA4/BRG1/BAF190A, SMARCB1/BAF47, SMARCC1/BAF155, SMARCE1/BAF57, SMARCC2/BAF170, DPF1/BAF45B, DPF3/BAF45C, ACTL6B/BAF53B and actin. Component of the SWI/SNF-B (PBAF) chromatin remodeling complex, at least composed of SMARCA4/BRG1, SMARCB1/BAF47/SNF5, ACTL6A/BAF53A or ACTL6B/BAF53B, SMARCE1/BAF57, SMARCD1/BAF60A, SMARCD2/BAF60B, perhaps SMARCD3/BAF60C, SMARCC1/BAF155, SMARCC2/BAF170, PBRM1/BAF180, ARID2/BAF200 and actin (ACTB). Component of SWI/SNF (GBAF) subcomplex, which includes at least BICRA or BICRAL (mutually exclusive), BRD9, SS18, SMARCA2/BRM, SMARCA4/BRG1/BAF190A, ACTL6A/BAF53, SMARCC1/BAF155, and SMARCD1/BAF60A. Specifically interacts with the VDR heterodimer complex. Interacts with ESR1, NR3C1, NR1H4, PGR, SMARCA4, SMARCC1 and SMARCC2. Interacts with DPF2. Interacts with DPF3a (isoform 2 of DPF3/BAF45C) and with HDGFL2 in a DPF3a-dependent manner. Interacts with FOS, FOSB isoform 1 and 2, FOSL1 and FOSL2. Interacts with AKIRIN2. As to expression, ubiquitous.

Its subcellular location is the nucleus. Involved in transcriptional activation and repression of select genes by chromatin remodeling (alteration of DNA-nucleosome topology). Component of SWI/SNF chromatin remodeling complexes that carry out key enzymatic activities, changing chromatin structure by altering DNA-histone contacts within a nucleosome in an ATP-dependent manner. Belongs to the neural progenitors-specific chromatin remodeling complex (npBAF complex) and the neuron-specific chromatin remodeling complex (nBAF complex). During neural development a switch from a stem/progenitor to a postmitotic chromatin remodeling mechanism occurs as neurons exit the cell cycle and become committed to their adult state. The transition from proliferating neural stem/progenitor cells to postmitotic neurons requires a switch in subunit composition of the npBAF and nBAF complexes. As neural progenitors exit mitosis and differentiate into neurons, npBAF complexes which contain ACTL6A/BAF53A and PHF10/BAF45A, are exchanged for homologous alternative ACTL6B/BAF53B and DPF1/BAF45B or DPF3/BAF45C subunits in neuron-specific complexes (nBAF). The npBAF complex is essential for the self-renewal/proliferative capacity of the multipotent neural stem cells. The nBAF complex along with CREST plays a role regulating the activity of genes essential for dendrite growth. Has a strong influence on vitamin D-mediated transcriptional activity from an enhancer vitamin D receptor element (VDRE). May be a link between mammalian SWI-SNF-like chromatin remodeling complexes and the vitamin D receptor (VDR) heterodimer. Mediates critical interactions between nuclear receptors and the BRG1/SMARCA4 chromatin-remodeling complex for transactivation. This is SWI/SNF-related matrix-associated actin-dependent regulator of chromatin subfamily D member 1 (Smarcd1) from Mus musculus (Mouse).